A 431-amino-acid chain; its full sequence is Glutamate-1-semialdehyde 2,1-aminomutase (431 aa).

K269 carries the post-translational modification N6-(pyridoxal phosphate)lysine.

This sequence belongs to the class-III pyridoxal-phosphate-dependent aminotransferase family. HemL subfamily. In terms of assembly, homodimer. It depends on pyridoxal 5'-phosphate as a cofactor.

Its subcellular location is the cytoplasm. It catalyses the reaction (S)-4-amino-5-oxopentanoate = 5-aminolevulinate. It functions in the pathway porphyrin-containing compound metabolism; protoporphyrin-IX biosynthesis; 5-aminolevulinate from L-glutamyl-tRNA(Glu): step 2/2. It participates in porphyrin-containing compound metabolism; chlorophyll biosynthesis. This is Glutamate-1-semialdehyde 2,1-aminomutase from Chlorobium phaeovibrioides (strain DSM 265 / 1930) (Prosthecochloris vibrioformis (strain DSM 265)).